The chain runs to 280 residues: Extracellular metalloprotease GLRG_06286 (280 aa).

A signal peptide spans 1–17; sequence MQVTFTLVAALAGMASA. An N-linked (GlcNAc...) asparagine glycan is attached at N51. H196 lines the Zn(2+) pocket. E197 is a catalytic residue. Residue H200 coordinates Zn(2+). A disordered region spans residues 217 to 236; the sequence is DSIADTPAQSSPSSGCPVGR. A disulfide bond links C232 and C259.

It belongs to the peptidase M43B family.

Its subcellular location is the secreted. Secreted metalloproteinase that allows assimilation of proteinaceous substrates. This Colletotrichum graminicola (strain M1.001 / M2 / FGSC 10212) (Maize anthracnose fungus) protein is Extracellular metalloprotease GLRG_06286.